The chain runs to 121 residues: Small ribosomal subunit protein bS6 (121 aa).

The tract at residues 94–121 (KAETGPSAVMKRVEKEEARKSSQQETAA) is disordered. Positions 104 to 115 (KRVEKEEARKSS) are enriched in basic and acidic residues.

This sequence belongs to the bacterial ribosomal protein bS6 family.

Binds together with bS18 to 16S ribosomal RNA. This chain is Small ribosomal subunit protein bS6, found in Leptothrix cholodnii (strain ATCC 51168 / LMG 8142 / SP-6) (Leptothrix discophora (strain SP-6)).